A 382-amino-acid polypeptide reads, in one-letter code: 3-ketosteroid-9-alpha-monooxygenase, oxygenase component (382 aa).

Positions 20-122 (WHCLGLSRTF…TMEKHGQLFV (103 aa)) constitute a Rieske domain. [2Fe-2S] cluster-binding residues include C61, H63, C80, and H83. The Fe cation site is built by N169, H175, H180, and D298.

As to quaternary structure, homotrimer. The two-component system 3-ketosteroid-9-alpha-monooxygenase is composed of an oxygenase component KshA and a reductase component KshB. The cofactor is [2Fe-2S] cluster. Fe cation is required as a cofactor.

It catalyses the reaction androsta-1,4-diene-3,17-dione + 2 reduced [2Fe-2S]-[ferredoxin] + O2 + 2 H(+) = 9alpha-hydroxyandrosta-1,4-diene-3,17-dione + 2 oxidized [2Fe-2S]-[ferredoxin] + H2O. Functionally, in vitro, catalyzes the introduction of a 9alpha-hydroxyl moiety into the ring B of 3-ketosteroid substrates such as 1,4-androstadiene-3,17-dione (ADD), 4-androstene-3,17-dione (AD), 4-androstene-17beta-ol-3-one (testosterone), 4-pregnene-3,20-dione (progesterone), 23,24-bisnorcholesta-4-ene-22-oate and 23,24-bisnorcholesta-1,4-diene-22-oate. The chain is 3-ketosteroid-9-alpha-monooxygenase, oxygenase component from Rhodococcus rhodochrous.